A 928-amino-acid chain; its full sequence is Protein ARABIDILLO 2 (928 aa).

A Nuclear localization signal motif is present at residues 3 to 8 (RRVRQR). An F-box domain is found at 37-83 (YVNWTSLPYDTVFHLFTRLNYRDRASLASTCRTWRSLGASSFLWSSL). 13 ARM repeats span residues 147–186 (AARH…KLRV), 237–278 (TSNI…KSSQ), 303–341 (KGKV…DLIR), 370–409 (SQGL…TFIV), 419–458 (CGRA…NLSV), 460–499 (AKVA…NLSV), 501–543 (EEHK…NLAA), 545–585 (DKCS…NLAA), 591–630 (GNNA…NLAF), 632–674 (DKNR…GLSV), 676–715 (EANS…NLSF), 717–757 (PGNA…YMFD), and 824–864 (IPEA…QFTI).

Belongs to the beta-catenin family. In terms of tissue distribution, expressed ubiquitously.

The protein resides in the nucleus. In terms of biological role, promotes lateral root initiation and development, independently of auxin (IAA) and abscisis acid (ABA). This chain is Protein ARABIDILLO 2, found in Arabidopsis thaliana (Mouse-ear cress).